We begin with the raw amino-acid sequence, 514 residues long: Major facilitator superfamily domain-containing protein 4A (514 aa).

Helical transmembrane passes span Leu19–Leu39, Ile53–Val73, Leu82–Cys102, Val107–Asn127, and Ala139–Ile159. Asn177 and Asn203 each carry an N-linked (GlcNAc...) asparagine glycan. The next 7 membrane-spanning stretches (helical) occupy residues Tyr221–Leu241, Phe307–Ala327, Val347–Ile367, Ala376–Phe396, Val400–Ser420, Val438–Phe458, and Phe466–Phe486.

This sequence belongs to the major facilitator superfamily.

It localises to the membrane. This chain is Major facilitator superfamily domain-containing protein 4A (MFSD4A), found in Pongo abelii (Sumatran orangutan).